The sequence spans 418 residues: Serine--tRNA ligase (418 aa).

231–233 (TAE) contributes to the L-serine binding site. ATP is bound at residue 262-264 (RSE). Glu285 provides a ligand contact to L-serine. ATP is bound at residue 349–352 (EISS). Ser385 lines the L-serine pocket.

It belongs to the class-II aminoacyl-tRNA synthetase family. Type-1 seryl-tRNA synthetase subfamily. In terms of assembly, homodimer. The tRNA molecule binds across the dimer.

The protein localises to the cytoplasm. The enzyme catalyses tRNA(Ser) + L-serine + ATP = L-seryl-tRNA(Ser) + AMP + diphosphate + H(+). The catalysed reaction is tRNA(Sec) + L-serine + ATP = L-seryl-tRNA(Sec) + AMP + diphosphate + H(+). The protein operates within aminoacyl-tRNA biosynthesis; selenocysteinyl-tRNA(Sec) biosynthesis; L-seryl-tRNA(Sec) from L-serine and tRNA(Sec): step 1/1. Functionally, catalyzes the attachment of serine to tRNA(Ser). Is also able to aminoacylate tRNA(Sec) with serine, to form the misacylated tRNA L-seryl-tRNA(Sec), which will be further converted into selenocysteinyl-tRNA(Sec). This chain is Serine--tRNA ligase, found in Ureaplasma urealyticum serovar 10 (strain ATCC 33699 / Western).